The following is a 213-amino-acid chain: Probable septum site-determining protein MinC (213 aa).

This sequence belongs to the MinC family. Interacts with MinD and FtsZ.

Its function is as follows. Cell division inhibitor that blocks the formation of polar Z ring septums. Rapidly oscillates between the poles of the cell to destabilize FtsZ filaments that have formed before they mature into polar Z rings. Prevents FtsZ polymerization. This Clostridium botulinum (strain Eklund 17B / Type B) protein is Probable septum site-determining protein MinC.